Consider the following 379-residue polypeptide: 4-hydroxy-3-methylbut-2-enyl diphosphate reductase (379 aa).

Position 39 (Cys39) interacts with [4Fe-4S] cluster. His69 lines the (2E)-4-hydroxy-3-methylbut-2-enyl diphosphate pocket. His69 serves as a coordination point for dimethylallyl diphosphate. His69 is an isopentenyl diphosphate binding site. Cys130 lines the [4Fe-4S] cluster pocket. Residue His158 participates in (2E)-4-hydroxy-3-methylbut-2-enyl diphosphate binding. Residue His158 participates in dimethylallyl diphosphate binding. His158 is an isopentenyl diphosphate binding site. Glu160 functions as the Proton donor in the catalytic mechanism. (2E)-4-hydroxy-3-methylbut-2-enyl diphosphate is bound at residue Thr223. [4Fe-4S] cluster is bound at residue Cys261. Residues Ser290, Ser291, Asn292, and Ser352 each contribute to the (2E)-4-hydroxy-3-methylbut-2-enyl diphosphate site. Positions 290, 291, 292, and 352 each coordinate dimethylallyl diphosphate. Isopentenyl diphosphate is bound by residues Ser290, Ser291, Asn292, and Ser352.

Belongs to the IspH family. [4Fe-4S] cluster serves as cofactor.

It catalyses the reaction isopentenyl diphosphate + 2 oxidized [2Fe-2S]-[ferredoxin] + H2O = (2E)-4-hydroxy-3-methylbut-2-enyl diphosphate + 2 reduced [2Fe-2S]-[ferredoxin] + 2 H(+). The enzyme catalyses dimethylallyl diphosphate + 2 oxidized [2Fe-2S]-[ferredoxin] + H2O = (2E)-4-hydroxy-3-methylbut-2-enyl diphosphate + 2 reduced [2Fe-2S]-[ferredoxin] + 2 H(+). It functions in the pathway isoprenoid biosynthesis; dimethylallyl diphosphate biosynthesis; dimethylallyl diphosphate from (2E)-4-hydroxy-3-methylbutenyl diphosphate: step 1/1. Its pathway is isoprenoid biosynthesis; isopentenyl diphosphate biosynthesis via DXP pathway; isopentenyl diphosphate from 1-deoxy-D-xylulose 5-phosphate: step 6/6. Catalyzes the conversion of 1-hydroxy-2-methyl-2-(E)-butenyl 4-diphosphate (HMBPP) into a mixture of isopentenyl diphosphate (IPP) and dimethylallyl diphosphate (DMAPP). Acts in the terminal step of the DOXP/MEP pathway for isoprenoid precursor biosynthesis. The sequence is that of 4-hydroxy-3-methylbut-2-enyl diphosphate reductase from Synechocystis sp. (strain ATCC 27184 / PCC 6803 / Kazusa).